Consider the following 140-residue polypeptide: Translation initiation factor 2 subunit beta (140 aa).

The protein belongs to the eIF-2-beta/eIF-5 family. In terms of assembly, heterotrimer composed of an alpha, a beta and a gamma chain.

Its function is as follows. eIF-2 functions in the early steps of protein synthesis by forming a ternary complex with GTP and initiator tRNA. This Pyrococcus horikoshii (strain ATCC 700860 / DSM 12428 / JCM 9974 / NBRC 100139 / OT-3) protein is Translation initiation factor 2 subunit beta (eif2b).